A 1319-amino-acid chain; its full sequence is DNA (cytosine-5)-methyltransferase CMT2 (1319 aa).

Positions 1-15 (METPPPDPVSPPPPA) are enriched in pro residues. Disordered regions lie at residues 1-34 (METP…GGFS), 142-189 (ALDS…VASS), 265-302 (SAAS…KLPA), and 442-468 (KSRV…RART). The segment covering 266 to 279 (AASSMPLNQNGDSS) has biased composition (polar residues). The segment covering 285-296 (RVADSRKSRSSE) has biased composition (basic and acidic residues). Positions 602–719 (YTFCIGECAF…IDYSTFSTIE (118 aa)) constitute a BAH domain. One can recognise an SAM-dependent MTase C5-type domain in the interval 758-1296 (LSLLDLYCGC…YALAMAYLKK (539 aa)). Positions 863–928 (FEVWKLVDIC…EGHRQRILPR (66 aa)) constitute a Chromo domain. The active site involves Cys-941.

The protein localises to the nucleus. The catalysed reaction is a 2'-deoxycytidine in DNA + S-adenosyl-L-methionine = a 5-methyl-2'-deoxycytidine in DNA + S-adenosyl-L-homocysteine + H(+). Functionally, involved in CpXpG DNA methylation. This chain is DNA (cytosine-5)-methyltransferase CMT2, found in Oryza sativa subsp. japonica (Rice).